Here is a 170-residue protein sequence, read N- to C-terminus: Large ribosomal subunit protein uL10 (170 aa).

It belongs to the universal ribosomal protein uL10 family. Part of the ribosomal stalk of the 50S ribosomal subunit. The N-terminus interacts with L11 and the large rRNA to form the base of the stalk. The C-terminus forms an elongated spine to which L12 dimers bind in a sequential fashion forming a multimeric L10(L12)X complex.

Its function is as follows. Forms part of the ribosomal stalk, playing a central role in the interaction of the ribosome with GTP-bound translation factors. The protein is Large ribosomal subunit protein uL10 of Chlamydia caviae (strain ATCC VR-813 / DSM 19441 / 03DC25 / GPIC) (Chlamydophila caviae).